The primary structure comprises 399 residues: Methylthioribose kinase (399 aa).

ATP-binding positions include Asn-40, Lys-57, and 111 to 113 (EDL). A substrate-binding site is contributed by Asp-229. ATP is bound at residue 246-248 (DAE). A substrate-binding site is contributed by Arg-344.

This sequence belongs to the methylthioribose kinase family. Homodimer.

The catalysed reaction is 5-(methylsulfanyl)-D-ribose + ATP = 5-(methylsulfanyl)-alpha-D-ribose 1-phosphate + ADP + H(+). It participates in amino-acid biosynthesis; L-methionine biosynthesis via salvage pathway; S-methyl-5-thio-alpha-D-ribose 1-phosphate from S-methyl-5'-thioadenosine (hydrolase route): step 2/2. In terms of biological role, catalyzes the phosphorylation of methylthioribose into methylthioribose-1-phosphate. This is Methylthioribose kinase from Erwinia tasmaniensis (strain DSM 17950 / CFBP 7177 / CIP 109463 / NCPPB 4357 / Et1/99).